We begin with the raw amino-acid sequence, 248 residues long: Large ribosomal subunit protein uL29m (248 aa).

2 disordered regions span residues 77 to 107 and 223 to 248; these read VSKYPLPRPVKPKEQEKRPSNPKHGLWGFFG and AYEPPALDVEEPKGEASDSVKTPPSS.

The protein belongs to the universal ribosomal protein uL29 family. In terms of assembly, component of the mitochondrial large ribosomal subunit. Mature mitochondrial ribosomes consist of a small (37S) and a large (54S) subunit. The 37S subunit contains at least 33 different proteins and 1 molecule of RNA (15S). The 54S subunit contains at least 45 different proteins and 1 molecule of RNA (21S).

Its subcellular location is the mitochondrion. In Ajellomyces capsulatus (strain NAm1 / WU24) (Darling's disease fungus), this protein is Large ribosomal subunit protein uL29m (MRPL4).